The chain runs to 515 residues: Iroquois-class homeodomain protein IRX-4 (515 aa).

The homeobox; TALE-type DNA-binding region spans 144-205 (GTRRKNATRE…NARRRLKKEN (62 aa)). Disordered stretches follow at residues 205 to 258 (NKMT…ELEL), 278 to 307 (TPFQ…STTL), and 398 to 425 (GPTG…RHQD). Residues 214 to 223 (KCADEKRPYG) show a composition bias toward basic and acidic residues. Residues 224-236 (EGEEEEAGEEESR) are compositionally biased toward acidic residues. Residues 237–257 (EEPLKSAKSEGHAGKDDKELE) show a composition bias toward basic and acidic residues. The segment covering 399-419 (PTGVSATTPASSPAVTAPSGA) has biased composition (low complexity).

This sequence belongs to the TALE/IRO homeobox family. As to quaternary structure, interacts with the vitamin D receptor VDR but doesn't affect its transactivation activity. Expressed in the developing central nervous system, skin, and vibrissae, but predominantly expressed in the cardiac ventricles of the developing heart. Not expressed in the developing metanephric kidney or adult kidney.

Its subcellular location is the nucleus. Likely to be an important mediator of ventricular differentiation during cardiac development. In Mus musculus (Mouse), this protein is Iroquois-class homeodomain protein IRX-4 (Irx4).